The chain runs to 487 residues: Serine/threonine-protein kinase 4 (487 aa).

Residue Met1 is modified to N-acetylmethionine. Thr3 is subject to Phosphothreonine. The 252-residue stretch at 30-281 folds into the Protein kinase domain; the sequence is FDVLEKLGEG…ATQLLQHPFV (252 aa). ATP contacts are provided by residues 36-44 and Lys59; that span reads LGEGSYGSV. Catalysis depends on Asp149, which acts as the Proton acceptor. Thr183 is subject to Phosphothreonine; by autocatalysis. Phosphoserine is present on Ser265. Residues 289–311 adopt a coiled-coil conformation; that stretch reads ILRDLINEAMDVKLKRQEAQQRE. Positions 305 to 334 are disordered; the sequence is QEAQQREVDQDDEENSEEDEMDSGTMVRAA. Positions 313 to 326 are enriched in acidic residues; that stretch reads DQDDEENSEEDEMD. Ser320 is modified (phosphoserine). A phosphothreonine mark is found at Thr340 and Thr367. Position 387 is a phosphothreonine; by PKB/AKT1 (Thr387). At Ser410 the chain carries Phosphoserine. Tyr433 carries the post-translational modification Phosphotyrosine. The SARAH domain maps to 433-480; that stretch reads YEFLKSWTVEDLQKRLLALDPMMEQEMEEIRQKYRSKRQPILDAIEAK.

Belongs to the protein kinase superfamily. STE Ser/Thr protein kinase family. STE20 subfamily. Homodimer; mediated via the coiled-coil region. Interacts with NORE1, which inhibits autoactivation. Interacts with and stabilizes SAV1. Interacts with RASSF1. Interacts with FOXO3. Interacts with RASSF2 (via SARAH domain). Interacts with AR, PKB/AKT1, TNNI3 and SIRT1. Interacts with MARK3 and SCRIB in the presence of DLG5. Interacts with DLG5 (via PDZ domain 3). Requires Mg(2+) as cofactor. In terms of processing, autophosphorylated on serine and threonine residues. Phosphorylation at Thr-387 by PKB/AKT1, leads to inhibition of its: kinase activity, nuclear translocation and autophosphorylation at Thr-183. It also diminishes its cleavage by caspases and its ability to phosphorylate FOXO3. Proteolytically cleaved by caspase-3 during apoptosis at Asp-326 resulting in a 37 kDa form. Proteolytic cleavage results in kinase activation and nuclear translocation of the truncated form (MST1/N).

Its subcellular location is the cytoplasm. The protein localises to the nucleus. It catalyses the reaction L-seryl-[protein] + ATP = O-phospho-L-seryl-[protein] + ADP + H(+). It carries out the reaction L-threonyl-[protein] + ATP = O-phospho-L-threonyl-[protein] + ADP + H(+). With respect to regulation, inhibited by the C-terminal non-catalytic region. Activated by caspase-cleavage. Full activation also requires homodimerization and autophosphorylation of Thr-183. Activated by RASSF1 which acts by preventing its dephosphorylation. In terms of biological role, stress-activated, pro-apoptotic kinase which, following caspase-cleavage, enters the nucleus and induces chromatin condensation followed by internucleosomal DNA fragmentation. Key component of the Hippo signaling pathway which plays a pivotal role in organ size control and tumor suppression by restricting proliferation and promoting apoptosis. The core of this pathway is composed of a kinase cascade wherein STK3/MST2 and STK4/MST1, in complex with its regulatory protein SAV1, phosphorylates and activates LATS1/2 in complex with its regulatory protein MOB1, which in turn phosphorylates and inactivates YAP1 oncoprotein and WWTR1/TAZ. Phosphorylation of YAP1 by LATS2 inhibits its translocation into the nucleus to regulate cellular genes important for cell proliferation, cell death, and cell migration. STK3/MST2 and STK4/MST1 are required to repress proliferation of mature hepatocytes, to prevent activation of facultative adult liver stem cells (oval cells), and to inhibit tumor formation. Phosphorylates 'Ser-14' of histone H2B (H2BS14ph) during apoptosis. Phosphorylates FOXO3 upon oxidative stress, which results in its nuclear translocation and cell death initiation. Phosphorylates MOBKL1A, MOBKL1B and RASSF2. Phosphorylates TNNI3 (cardiac Tn-I) and alters its binding affinity to TNNC1 (cardiac Tn-C) and TNNT2 (cardiac Tn-T). Phosphorylates FOXO1 on 'Ser-212' and regulates its activation and stimulates transcription of PMAIP1 in a FOXO1-dependent manner. Phosphorylates SIRT1 and inhibits SIRT1-mediated p53/TP53 deacetylation, thereby promoting p53/TP53 dependent transcription and apoptosis upon DNA damage. Acts as an inhibitor of PKB/AKT1. Phosphorylates AR on 'Ser-650' and suppresses its activity by intersecting with PKB/AKT1 signaling and antagonizing formation of AR-chromatin complexes. The sequence is that of Serine/threonine-protein kinase 4 (Stk4) from Mus musculus (Mouse).